The following is a 118-amino-acid chain: Large ribosomal subunit protein bL19 (118 aa).

Belongs to the bacterial ribosomal protein bL19 family.

This protein is located at the 30S-50S ribosomal subunit interface and may play a role in the structure and function of the aminoacyl-tRNA binding site. The polypeptide is Large ribosomal subunit protein bL19 (Aliarcobacter butzleri (strain RM4018) (Arcobacter butzleri)).